Consider the following 96-residue polypeptide: Co-chaperonin GroES (96 aa).

The protein belongs to the GroES chaperonin family. As to quaternary structure, heptamer of 7 subunits arranged in a ring. Interacts with the chaperonin GroEL.

It is found in the cytoplasm. Its function is as follows. Together with the chaperonin GroEL, plays an essential role in assisting protein folding. The GroEL-GroES system forms a nano-cage that allows encapsulation of the non-native substrate proteins and provides a physical environment optimized to promote and accelerate protein folding. GroES binds to the apical surface of the GroEL ring, thereby capping the opening of the GroEL channel. The chain is Co-chaperonin GroES from Polaromonas sp. (strain JS666 / ATCC BAA-500).